Reading from the N-terminus, the 578-residue chain is Proteasome-associated ATPase (578 aa).

Residues 35 to 84 are a coiled coil; sequence RHLTALEEQLGAARTRLAQVSAQNDRLATTLREARDQIVALKAEVDRLGQ. 266 to 271 lines the ATP pocket; sequence GCGKTL. The segment at 577 to 578 is docks into pockets in the proteasome alpha-ring; the sequence is YL.

This sequence belongs to the AAA ATPase family. In terms of assembly, homohexamer. Assembles into a hexameric ring structure that caps the 20S proteasome core. Strongly interacts with the prokaryotic ubiquitin-like protein Pup through a hydrophobic interface; the interacting region of ARC lies in its N-terminal coiled-coil domain. There is one Pup binding site per ARC hexamer ring. Upon ATP-binding, the C-terminus of ARC interacts with the alpha-rings of the proteasome core, possibly by binding to the intersubunit pockets.

It participates in protein degradation; proteasomal Pup-dependent pathway. In terms of biological role, ATPase which is responsible for recognizing, binding, unfolding and translocation of pupylated proteins into the bacterial 20S proteasome core particle. May be essential for opening the gate of the 20S proteasome via an interaction with its C-terminus, thereby allowing substrate entry and access to the site of proteolysis. Thus, the C-termini of the proteasomal ATPase may function like a 'key in a lock' to induce gate opening and therefore regulate proteolysis. This is Proteasome-associated ATPase from Kineococcus radiotolerans (strain ATCC BAA-149 / DSM 14245 / SRS30216).